Consider the following 317-residue polypeptide: Methionyl-tRNA formyltransferase (317 aa).

112–115 contributes to the (6S)-5,6,7,8-tetrahydrofolate binding site; the sequence is SLLP.

The protein belongs to the Fmt family.

The catalysed reaction is L-methionyl-tRNA(fMet) + (6R)-10-formyltetrahydrofolate = N-formyl-L-methionyl-tRNA(fMet) + (6S)-5,6,7,8-tetrahydrofolate + H(+). In terms of biological role, attaches a formyl group to the free amino group of methionyl-tRNA(fMet). The formyl group appears to play a dual role in the initiator identity of N-formylmethionyl-tRNA by promoting its recognition by IF2 and preventing the misappropriation of this tRNA by the elongation apparatus. The protein is Methionyl-tRNA formyltransferase of Histophilus somni (strain 129Pt) (Haemophilus somnus).